Consider the following 317-residue polypeptide: Endochitinase 3 (317 aa).

The N-terminal stretch at 1–19 is a signal peptide; sequence MFVRNALVVTGLLAALTQA. Residues asparagine 25, asparagine 49, and asparagine 169 are each glycosylated (N-linked (GlcNAc...) asparagine). Residues 29 to 317 enclose the GH18 domain; it reads HKLTVYWGAE…NYQKEIKANL (289 aa). Glutamate 170 acts as the Proton donor in catalysis. Asparagine 245 is a glycosylation site (N-linked (GlcNAc...) asparagine).

The protein belongs to the glycosyl hydrolase 18 family. Chitinase class III subfamily.

Its subcellular location is the secreted. It catalyses the reaction Random endo-hydrolysis of N-acetyl-beta-D-glucosaminide (1-&gt;4)-beta-linkages in chitin and chitodextrins.. Its function is as follows. Secreted chitinase involved in the degradation of chitin, a component of the cell walls of fungi and exoskeletal elements of some animals (including worms and arthropods). Participates in the infection process and directly acts in the penetration process of the host cuticle. Involved in heat-shock adaptation. This chain is Endochitinase 3 (chi3), found in Metarhizium robertsii (strain ARSEF 23 / ATCC MYA-3075) (Metarhizium anisopliae (strain ARSEF 23)).